The sequence spans 337 residues: BRI1 kinase inhibitor 1 (337 aa).

Over residues 1–25 (METNLQQVKNSSQTFSEKQNPKQEA) the composition is skewed to polar residues. Disordered regions lie at residues 1-38 (METN…SSPS) and 51-72 (SSSS…SSYQ). The span at 26–38 (SPSPISSTCSSPS) shows a compositional bias: low complexity. Tyrosine 211 is subject to Phosphotyrosine. A disordered region spans residues 270-310 (SAPASMRTSPTNSGHLRVSTAGLSSSSGSTSSSSSDSTMEE). A compositionally biased stretch (low complexity) spans 288–310 (STAGLSSSSGSTSSSSSDSTMEE).

In terms of assembly, interacts (via C-terminus) with BRI1 (via kinase domain). Phosphorylated on Tyr-211 in response to brassinosteroid perception, leading to its inactivation: once phosphorylated, displaced into the cytosol where it is inactive. As to expression, expressed in leaves, petioles, shoot apices, hypocotyls, roots and flowers.

The protein resides in the cell membrane. It localises to the cytoplasm. Functionally, negative regulator of brassinosteroid signaling. When associated to the membrane, limits the interaction of BRI1 with BAK1 by binding to the kinase-inactive form of BRI1. This chain is BRI1 kinase inhibitor 1 (BKI1), found in Arabidopsis thaliana (Mouse-ear cress).